Consider the following 218-residue polypeptide: 4-coumaroyl-homoserine lactone synthase (218 aa).

The protein belongs to the autoinducer synthase family.

It catalyses the reaction 4-coumaroyl-CoA + S-adenosyl-L-methionine = N-(4-coumaroyl)-L-homoserine lactone + S-methyl-5'-thioadenosine + CoA + H(+). Functionally, catalyzes the synthesis of 4-coumaroyl-homoserine lactone, a quorum-sensing (QS) autoinducer molecule which binds to RpaR transcriptional regulator to regulate expression of QS-dependent genes. The sequence is that of 4-coumaroyl-homoserine lactone synthase from Rhodopseudomonas palustris (strain ATCC BAA-98 / CGA009).